The following is a 338-amino-acid chain: Formamidase (338 aa).

One can recognise a CN hydrolase domain in the interval 15 to 257 (VVIGLAQLAL…DEIVCCELRP (243 aa)). The active-site Proton acceptor is the glutamate 61. Lysine 130 acts as the Proton donor in catalysis. Cysteine 163 functions as the Nucleophile in the catalytic mechanism.

This sequence belongs to the carbon-nitrogen hydrolase superfamily. Aliphatic amidase family.

It carries out the reaction formamide + H2O = formate + NH4(+). Is an aliphatic amidase with a restricted substrate specificity, as it only hydrolyzes formamide. This chain is Formamidase, found in Pseudomonas syringae pv. tomato (strain ATCC BAA-871 / DC3000).